A 199-amino-acid polypeptide reads, in one-letter code: Recombination protein RecR (199 aa).

The C4-type zinc-finger motif lies at 57–72 (CSICGNITDKDPCYVC). The 97-residue stretch at 80-176 (TIVCVVQDSR…RVTRIAHGLP (97 aa)) folds into the Toprim domain.

It belongs to the RecR family.

May play a role in DNA repair. It seems to be involved in an RecBC-independent recombinational process of DNA repair. It may act with RecF and RecO. This is Recombination protein RecR from Exiguobacterium sibiricum (strain DSM 17290 / CCUG 55495 / CIP 109462 / JCM 13490 / 255-15).